The primary structure comprises 77 residues: Putative Fis-like DNA-binding protein (77 aa).

The H-T-H motif DNA-binding region spans 53 to 72 (QSLAADYLGINRNTLRKKLQ).

It belongs to the transcriptional regulatory Fis family.

The chain is Putative Fis-like DNA-binding protein from Ralstonia nicotianae (strain ATCC BAA-1114 / GMI1000) (Ralstonia solanacearum).